We begin with the raw amino-acid sequence, 510 residues long: NAD(P)H-quinone oxidoreductase subunit 2 A, chloroplastic (510 aa).

Helical transmembrane passes span 24–44 (LLLF…GLIL), 57–77 (IPWL…ALLF), 99–119 (IFQF…VEYI), 124–144 (MAIT…MFLC), 149–169 (LITI…LSGY), 183–203 (YLLM…WLYG), 227–247 (PGIS…LSPA), 295–315 (WHLL…LIAI), 323–343 (MLAY…IVGD), 354–374 (YMLF…SFGL), 395–415 (ALSL…AGFF), 418–438 (LHLF…IGLL), and 484–504 (MIVC…IIAI).

The protein belongs to the complex I subunit 2 family. In terms of assembly, NDH is composed of at least 16 different subunits, 5 of which are encoded in the nucleus.

The protein resides in the plastid. It is found in the chloroplast thylakoid membrane. It carries out the reaction a plastoquinone + NADH + (n+1) H(+)(in) = a plastoquinol + NAD(+) + n H(+)(out). The enzyme catalyses a plastoquinone + NADPH + (n+1) H(+)(in) = a plastoquinol + NADP(+) + n H(+)(out). NDH shuttles electrons from NAD(P)H:plastoquinone, via FMN and iron-sulfur (Fe-S) centers, to quinones in the photosynthetic chain and possibly in a chloroplast respiratory chain. The immediate electron acceptor for the enzyme in this species is believed to be plastoquinone. Couples the redox reaction to proton translocation, and thus conserves the redox energy in a proton gradient. This Vitis vinifera (Grape) protein is NAD(P)H-quinone oxidoreductase subunit 2 A, chloroplastic.